Reading from the N-terminus, the 365-residue chain is Probable tRNA pseudouridine synthase B (365 aa).

D43 (nucleophile) is an active-site residue. The PUA domain maps to 209–285 (YPKIVVKRSA…DHIFLEADDG (77 aa)). The disordered stretch occupies residues 300 to 365 (SGSGLHKDIQ…GKERHGRDHQ (66 aa)). Basic and acidic residues-rich tracts occupy residues 304–318 (LHKD…KDTR), 326–336 (TGPEKTADRVW), and 354–365 (GGGKERHGRDHQ).

The protein belongs to the pseudouridine synthase TruB family. Type 2 subfamily.

The catalysed reaction is uridine(55) in tRNA = pseudouridine(55) in tRNA. Its function is as follows. Could be responsible for synthesis of pseudouridine from uracil-55 in the psi GC loop of transfer RNAs. This chain is Probable tRNA pseudouridine synthase B, found in Thermoplasma acidophilum (strain ATCC 25905 / DSM 1728 / JCM 9062 / NBRC 15155 / AMRC-C165).